The following is a 618-amino-acid chain: MPLMSNSERDKLESTLRRRFFYTPSFEIYGGVSGLFDLGPPGCQLQNNLIRLWREHFIMEENMLQVDGPMLTPYDVLKTSGHVDKFTDWMCRNPKTGEYYRADHLIEQTLKKRLLDKDVNPQDMKNMEKILTTIDGFSGPELNLVMQEYNINDPVTNDVLDALTSFNLMFETKIGASGQLKAFLRPETAQGQFLNFNKLLEINQGKIPFASASIGKSFRNEISPRSGLLRVREFLMAEIEHFVDPLNKSHAKFNEVLNEEIPLLSRRLQESGEVQLPVKMTIGEAVNSGMVENETLGYFMARVHQFLLNIGINKDKFRFRQHLKNEMAHYATDCWDGEILTSYGWIECVGCADRAAFDLTVHSKKTGRSLTVKQKLDTPKERTEWVVEVNKKFFGSKFKQKAKLIESVLSKFSQDELIRRHEELEKNGEFTCQVNGQIVKLDSSLVTIKMKTTLQHIREYIPNVIEPSFGLGRIIYCIFDHCFQVRVDSESRGFFSFPLQIAPIKVFVTTISNNDGFPAILKRISQALRKREIYFKIDDSNTSIGKKYARNDELGTPFGITIDFETIKDQTVTLRERNSMRQVRGTITDVISTIDKMLHNPDESDWDKSTFGLSPVKI.

Glu187 is a binding site for glycine. ATP contacts are provided by residues 219–221 and 230–231; these read RNE and RV. Glu238 serves as a coordination point for glycine. ATP is bound at residue 347 to 348; it reads EC. 466–468 is a binding site for glycine; that stretch reads EPS. Arg473 serves as a coordination point for ATP.

This sequence belongs to the class-II aminoacyl-tRNA synthetase family. As to quaternary structure, homodimer.

It localises to the cytoplasm. The enzyme catalyses tRNA(Gly) + glycine + ATP = glycyl-tRNA(Gly) + AMP + diphosphate. The catalysed reaction is 2 ATP + H(+) = P(1),P(4)-bis(5'-adenosyl) tetraphosphate + diphosphate. Functionally, catalyzes the ATP-dependent ligation of glycine to the 3'-end of its cognate tRNA, via the formation of an aminoacyl-adenylate intermediate (Gly-AMP). Also produces diadenosine tetraphosphate (Ap4A), a universal pleiotropic signaling molecule needed for cell regulation pathways, by direct condensation of 2 ATPs. Thereby, may play a special role in Ap4A homeostasis. The protein is Glycine--tRNA ligase 2 (GRS2) of Saccharomyces cerevisiae (strain ATCC 204508 / S288c) (Baker's yeast).